A 293-amino-acid chain; its full sequence is Elongation factor Ts (293 aa).

Positions threonine 80–valine 83 are involved in Mg(2+) ion dislocation from EF-Tu.

The protein belongs to the EF-Ts family.

Its subcellular location is the cytoplasm. Associates with the EF-Tu.GDP complex and induces the exchange of GDP to GTP. It remains bound to the aminoacyl-tRNA.EF-Tu.GTP complex up to the GTP hydrolysis stage on the ribosome. This Burkholderia ambifaria (strain MC40-6) protein is Elongation factor Ts.